A 222-amino-acid chain; its full sequence is MSPSAGLQFSLYFLQTKKVLWKLTDKEKGLCYILLFTLCFFADQENGGKALASPPGIWKRADVTFDSNTAFSSLVVSANKKTVKNVGVPQVVPDNPERFNSSPCVLGSPGFRSGKHYFEVKYGTQREWAVGIAGKSVKRKGNLMLVPEERIWQMGLWWLRHLETDPGRVHSTSGKITVFVDYNGGNVIFDLNRINTTLKANFNGEEVVPFFYLGGTVSLTTL.

The first 44 residues, 1–44 (MSPSAGLQFSLYFLQTKKVLWKLTDKEKGLCYILLFTLCFFADQ), serve as a signal peptide directing secretion. The propeptide occupies 45–52 (ENGGKALA). Residues 53–159 (SPPGIWKRAD…RIWQMGLWWL (107 aa)) form the B30.2/SPRY domain. The propeptide occupies 160-222 (RHLETDPGRV…LGGTVSLTTL (63 aa)). An N-linked (GlcNAc...) asparagine glycan is attached at N195.

This sequence belongs to the ohanin/vespryn family. As to expression, expressed by the venom gland.

It is found in the secreted. In terms of biological role, neurotoxin that produces dose-dependent hypolocomotion and hyperalgesia in mice. May directly act on the central nervous system, as it is 6500-fold more potent when administered intracerebroventricularly than intraperitoneal. The chain is Vespryn from Crotalus adamanteus (Eastern diamondback rattlesnake).